A 632-amino-acid chain; its full sequence is tRNA uridine 5-carboxymethylaminomethyl modification enzyme MnmG (632 aa).

Residues 15-20 (GAGHAG), isoleucine 127, and serine 182 each bind FAD. NAD(+) is bound at residue 276-290 (GPRYCPSIEDKIVRF). Glutamine 373 is a binding site for FAD.

It belongs to the MnmG family. Homodimer. Heterotetramer of two MnmE and two MnmG subunits. It depends on FAD as a cofactor.

It is found in the cytoplasm. NAD-binding protein involved in the addition of a carboxymethylaminomethyl (cmnm) group at the wobble position (U34) of certain tRNAs, forming tRNA-cmnm(5)s(2)U34. This chain is tRNA uridine 5-carboxymethylaminomethyl modification enzyme MnmG, found in Streptococcus pyogenes serotype M3 (strain SSI-1).